We begin with the raw amino-acid sequence, 380 residues long: Chaperone protein DnaJ (380 aa).

Residues 5–69 (DYYEILGVSK…QKRAHYDQFG (65 aa)) form the J domain. Residues 135-217 (GKETDIEIPS…CGGTGRVKRR (83 aa)) form a CR-type zinc finger. The Zn(2+) site is built by Cys148, Cys151, Cys165, Cys168, Cys191, Cys194, Cys205, and Cys208. 4 CXXCXGXG motif repeats span residues 148–155 (CNTCHGTG), 165–172 (CPHCHGAG), 191–198 (CPYCGGTG), and 205–212 (CTTCGGTG).

Belongs to the DnaJ family. Homodimer. The cofactor is Zn(2+).

It localises to the cytoplasm. In terms of biological role, participates actively in the response to hyperosmotic and heat shock by preventing the aggregation of stress-denatured proteins and by disaggregating proteins, also in an autonomous, DnaK-independent fashion. Unfolded proteins bind initially to DnaJ; upon interaction with the DnaJ-bound protein, DnaK hydrolyzes its bound ATP, resulting in the formation of a stable complex. GrpE releases ADP from DnaK; ATP binding to DnaK triggers the release of the substrate protein, thus completing the reaction cycle. Several rounds of ATP-dependent interactions between DnaJ, DnaK and GrpE are required for fully efficient folding. Also involved, together with DnaK and GrpE, in the DNA replication of plasmids through activation of initiation proteins. The sequence is that of Chaperone protein DnaJ from Geobacillus stearothermophilus (Bacillus stearothermophilus).